Here is a 180-residue protein sequence, read N- to C-terminus: Acireductone dioxygenase (180 aa).

Residues His97, His99, Glu103, and His141 each coordinate Fe(2+). Ni(2+)-binding residues include His97, His99, Glu103, and His141.

Belongs to the acireductone dioxygenase (ARD) family. Monomer. Requires Fe(2+) as cofactor. It depends on Ni(2+) as a cofactor.

The catalysed reaction is 1,2-dihydroxy-5-(methylsulfanyl)pent-1-en-3-one + O2 = 3-(methylsulfanyl)propanoate + CO + formate + 2 H(+). The enzyme catalyses 1,2-dihydroxy-5-(methylsulfanyl)pent-1-en-3-one + O2 = 4-methylsulfanyl-2-oxobutanoate + formate + 2 H(+). The protein operates within amino-acid biosynthesis; L-methionine biosynthesis via salvage pathway; L-methionine from S-methyl-5-thio-alpha-D-ribose 1-phosphate: step 5/6. Catalyzes 2 different reactions between oxygen and the acireductone 1,2-dihydroxy-3-keto-5-methylthiopentene (DHK-MTPene) depending upon the metal bound in the active site. Fe-containing acireductone dioxygenase (Fe-ARD) produces formate and 2-keto-4-methylthiobutyrate (KMTB), the alpha-ketoacid precursor of methionine in the methionine recycle pathway. Ni-containing acireductone dioxygenase (Ni-ARD) produces methylthiopropionate, carbon monoxide and formate, and does not lie on the methionine recycle pathway. The polypeptide is Acireductone dioxygenase (Yersinia pseudotuberculosis serotype O:3 (strain YPIII)).